Here is a 256-residue protein sequence, read N- to C-terminus: Calsenilin (256 aa).

The tract at residues 1–30 is disordered; sequence MQRAKEVMKVSDGSLLGEPGRTPLSKKEGV. Ser-14 carries the post-translational modification Phosphoserine. Lys-26 participates in a covalent cross-link: Glycyl lysine isopeptide (Lys-Gly) (interchain with G-Cter in SUMO1). Residues Cys-45 and Cys-46 are each lipidated (S-palmitoyl cysteine). 2 positions are modified to phosphoserine: Ser-60 and Ser-63. One can recognise an EF-hand 1; degenerate domain in the interval 67 to 123; it reads LELSAVRHQPEGLDQLQAQTKFTKKELQSLYRGFKNECPTGLVDEDTFKLIYSQFFP. Residue Lys-90 forms a Glycyl lysine isopeptide (Lys-Gly) (interchain with G-Cter in SUMO1) linkage. EF-hand domains follow at residues 126–161, 162–197, and 210–245; these read DATT…LLRG, TVHE…IYDM, and APLE…DENI. Residues Asp-175, Asn-177, Asp-179, Tyr-181, Glu-186, Asp-223, Asn-225, Asp-227, and Glu-234 each contribute to the Ca(2+) site. The interaction with KCND2 stretch occupies residues 243–256; sequence ENIMSSMQLFENVI.

The protein belongs to the recoverin family. As to quaternary structure, binds to DNA as a homomultimer. Dimerization is induced by binding to calcium. Interacts with the C-terminus of PSEN1 and PSEN2 and with PSEN2 CTF subunit. Associates with KCN1. Component of heteromultimeric potassium channels. Identified in potassium channel complexes containing KCND1, KCND2, KCND3, KCNIP1, KCNIP2, KCNIP3, KCNIP4, DPP6 and DPP10. Interacts with KCND2 and KCND3. Post-translationally, palmitoylated. Palmitoylation enhances association with the plasma membrane. Proteolytically cleaved by caspase-3.

The protein resides in the cytoplasm. The protein localises to the cell membrane. It is found in the endoplasmic reticulum. It localises to the golgi apparatus. Its subcellular location is the nucleus. In terms of biological role, regulatory subunit of Kv4/D (Shal)-type voltage-gated rapidly inactivating A-type potassium channels, such as KCND2/Kv4.2 and KCND3/Kv4.3. Modulates channel expression at the cell membrane, gating characteristics, inactivation kinetics and rate of recovery from inactivation in a calcium-dependent and isoform-specific manner. Its function is as follows. May play a role in the regulation of PSEN2 proteolytic processing and apoptosis. Together with PSEN2 involved in modulation of amyloid-beta formation. Functionally, calcium-dependent transcriptional repressor that binds to the DRE element of genes including PDYN and FOS. Affinity for DNA is reduced upon binding to calcium and enhanced by binding to magnesium. Seems to be involved in nociception. The chain is Calsenilin (KCNIP3) from Bos taurus (Bovine).